Consider the following 278-residue polypeptide: Acyl-[acyl-carrier-protein]--UDP-N-acetylglucosamine O-acyltransferase (278 aa).

Belongs to the transferase hexapeptide repeat family. LpxA subfamily. In terms of assembly, homotrimer.

It localises to the cytoplasm. It catalyses the reaction a (3R)-hydroxyacyl-[ACP] + UDP-N-acetyl-alpha-D-glucosamine = a UDP-3-O-[(3R)-3-hydroxyacyl]-N-acetyl-alpha-D-glucosamine + holo-[ACP]. The protein operates within glycolipid biosynthesis; lipid IV(A) biosynthesis; lipid IV(A) from (3R)-3-hydroxytetradecanoyl-[acyl-carrier-protein] and UDP-N-acetyl-alpha-D-glucosamine: step 1/6. Functionally, involved in the biosynthesis of lipid A, a phosphorylated glycolipid that anchors the lipopolysaccharide to the outer membrane of the cell. The polypeptide is Acyl-[acyl-carrier-protein]--UDP-N-acetylglucosamine O-acyltransferase (Brucella anthropi (strain ATCC 49188 / DSM 6882 / CCUG 24695 / JCM 21032 / LMG 3331 / NBRC 15819 / NCTC 12168 / Alc 37) (Ochrobactrum anthropi)).